Here is a 275-residue protein sequence, read N- to C-terminus: 2,3,4,5-tetrahydropyridine-2,6-dicarboxylate N-succinyltransferase (275 aa).

Positions 106 and 143 each coordinate substrate.

This sequence belongs to the transferase hexapeptide repeat family. Homotrimer.

The protein resides in the cytoplasm. The catalysed reaction is (S)-2,3,4,5-tetrahydrodipicolinate + succinyl-CoA + H2O = (S)-2-succinylamino-6-oxoheptanedioate + CoA. The protein operates within amino-acid biosynthesis; L-lysine biosynthesis via DAP pathway; LL-2,6-diaminopimelate from (S)-tetrahydrodipicolinate (succinylase route): step 1/3. The sequence is that of 2,3,4,5-tetrahydropyridine-2,6-dicarboxylate N-succinyltransferase from Burkholderia mallei (strain NCTC 10247).